The primary structure comprises 116 residues: Large ribosomal subunit protein bL19 (116 aa).

This sequence belongs to the bacterial ribosomal protein bL19 family.

In terms of biological role, this protein is located at the 30S-50S ribosomal subunit interface and may play a role in the structure and function of the aminoacyl-tRNA binding site. This is Large ribosomal subunit protein bL19 from Syntrophomonas wolfei subsp. wolfei (strain DSM 2245B / Goettingen).